The chain runs to 464 residues: tRNA modification GTPase MnmE (464 aa).

(6S)-5-formyl-5,6,7,8-tetrahydrofolate is bound by residues R25, E87, and K130. The region spanning 226–386 (GLSVVLAGQP…LREELLRIAG (161 aa)) is the TrmE-type G domain. N236 contributes to the K(+) binding site. GTP is bound by residues 236 to 241 (NVGKSS), 255 to 261 (TPIAGTT), and 280 to 283 (DTAG). Residue S240 participates in Mg(2+) binding. The K(+) site is built by T255, I257, and T260. Residue T261 coordinates Mg(2+). Residue K464 participates in (6S)-5-formyl-5,6,7,8-tetrahydrofolate binding.

Belongs to the TRAFAC class TrmE-Era-EngA-EngB-Septin-like GTPase superfamily. TrmE GTPase family. Homodimer. Heterotetramer of two MnmE and two MnmG subunits. Requires K(+) as cofactor.

The protein resides in the cytoplasm. Its function is as follows. Exhibits a very high intrinsic GTPase hydrolysis rate. Involved in the addition of a carboxymethylaminomethyl (cmnm) group at the wobble position (U34) of certain tRNAs, forming tRNA-cmnm(5)s(2)U34. The chain is tRNA modification GTPase MnmE from Paraburkholderia xenovorans (strain LB400).